The primary structure comprises 521 residues: AAA ATPase forming ring-shaped complexes (521 aa).

Positions 4–44 (TEDLAALNDRLMAKNHALAEALSRAGKELTKAKSQLAQLAQ) form a coiled coil. 235–240 (GNGKTM) is an ATP binding site.

Belongs to the AAA ATPase family. Homohexamer. Assembles into a hexameric ring structure.

The chain is AAA ATPase forming ring-shaped complexes from Bifidobacterium longum (strain DJO10A).